The primary structure comprises 559 residues: Dihydroxy-acid dehydratase (559 aa).

C49 is a [2Fe-2S] cluster binding site. D81 contributes to the Mg(2+) binding site. Residue C122 coordinates [2Fe-2S] cluster. Mg(2+) is bound by residues D123 and K124. At K124 the chain carries N6-carboxylysine. C194 contributes to the [2Fe-2S] cluster binding site. A Mg(2+)-binding site is contributed by E446. The Proton acceptor role is filled by S472.

It belongs to the IlvD/Edd family. In terms of assembly, homodimer. [2Fe-2S] cluster is required as a cofactor. Mg(2+) serves as cofactor.

It catalyses the reaction (2R)-2,3-dihydroxy-3-methylbutanoate = 3-methyl-2-oxobutanoate + H2O. The catalysed reaction is (2R,3R)-2,3-dihydroxy-3-methylpentanoate = (S)-3-methyl-2-oxopentanoate + H2O. Its pathway is amino-acid biosynthesis; L-isoleucine biosynthesis; L-isoleucine from 2-oxobutanoate: step 3/4. It participates in amino-acid biosynthesis; L-valine biosynthesis; L-valine from pyruvate: step 3/4. Its function is as follows. Functions in the biosynthesis of branched-chain amino acids. Catalyzes the dehydration of (2R,3R)-2,3-dihydroxy-3-methylpentanoate (2,3-dihydroxy-3-methylvalerate) into 2-oxo-3-methylpentanoate (2-oxo-3-methylvalerate) and of (2R)-2,3-dihydroxy-3-methylbutanoate (2,3-dihydroxyisovalerate) into 2-oxo-3-methylbutanoate (2-oxoisovalerate), the penultimate precursor to L-isoleucine and L-valine, respectively. This Prochlorococcus marinus subsp. pastoris (strain CCMP1986 / NIES-2087 / MED4) protein is Dihydroxy-acid dehydratase.